We begin with the raw amino-acid sequence, 81 residues long: MNRMFRVLGFWTGIFAVMFYLGDMKDASLLFFGQTILFVFLSYLNLTERMYIYIFGAYLTIFFAGFTYYSIFIMVPGGGGH.

Transmembrane regions (helical) follow at residues 27–47 and 54–74; these read ASLL…LNLT and IFGA…IFIM.

It localises to the cell membrane. This is an uncharacterized protein from Bacillus subtilis (strain 168).